Consider the following 409-residue polypeptide: BRCA1-A complex subunit Abraxas 1 (409 aa).

The 154-residue stretch at 7–160 folds into the MPN domain; sequence SAVLSGFVLG…HSLYKPQKGL (154 aa). S48 is subject to Phosphoserine. Residues 206–260 adopt a coiled-coil conformation; that stretch reads DGSLKEVHKINEMYASLQEELKSICKKVEDSEQAVDKLVKDVNRLKREIEKRRGA. Basic and acidic residues predominate over residues 362–372; it reads LLDTQDKRSKA. A disordered region spans residues 362–409; it reads LLDTQDKRSKADTGSSNQDKASKMSSPETDEEIEKMKGFGEYSRSPTF. Residues 373–388 are compositionally biased toward polar residues; sequence DTGSSNQDKASKMSSP. Phosphoserine occurs at positions 386 and 387. T390 bears the Phosphothreonine mark. Phosphoserine is present on residues S404 and S406. The pSXXF motif signature appears at 406 to 409; it reads SPTF.

It belongs to the FAM175 family. Abraxas subfamily. As to quaternary structure, component of the ARISC complex, at least composed of UIMC1/RAP80, ABRAXAS1, BRCC3/BRCC36, BABAM2 and BABAM1/NBA1. Component of the BRCA1-A complex, at least composed of BRCA1, BARD1, UIMC1/RAP80, ABRAXAS1, BRCC3/BRCC36, BABAM2 and BABAM1/NBA1. In the complex, interacts directly with UIMC1/RAP80, BRCC3/BRCC36 and BABAM2. Interacts directly (when phosphorylated at Ser-406) with BRCA1. Homodimer. The homodimer interacts directly (when phosphorylated at Ser-404 and Ser-406) with two BRCA1 chains, giving rise to a heterotetramer. Binds polyubiquitin. In terms of processing, phosphorylation of Ser-406 of the pSXXF motif by ATM or ATR constitutes a specific recognition motif for the BRCT domain of BRCA1. Ionizing radiation promotes rapid phosphorylation at Ser-404 and Ser-406 by ATM; this promotes recruitment of BRCA1 to sites of DNA damage.

Its subcellular location is the nucleus. Functionally, involved in DNA damage response and double-strand break (DSB) repair. Component of the BRCA1-A complex, acting as a central scaffold protein that assembles the various components of the complex and mediates the recruitment of BRCA1. The BRCA1-A complex specifically recognizes 'Lys-63'-linked ubiquitinated histones H2A and H2AX at DNA lesion sites, leading to target the BRCA1-BARD1 heterodimer to sites of DNA damage at DSBs. This complex also possesses deubiquitinase activity that specifically removes 'Lys-63'-linked ubiquitin on histones H2A and H2AX. This Homo sapiens (Human) protein is BRCA1-A complex subunit Abraxas 1.